Consider the following 284-residue polypeptide: Deoxyribonuclease-1 (284 aa).

An N-terminal signal peptide occupies residues 1–22 (MRYTGLMGTLLTLVNLLQLAGT). The N-linked (GlcNAc...) asparagine glycan is linked to Asn-40. Glu-100 is an active-site residue. Cys-123 and Cys-126 form a disulfide bridge. An N-linked (GlcNAc...) asparagine glycan is attached at Asn-128. His-156 is an active-site residue. Cys-195 and Cys-231 form a disulfide bridge.

It belongs to the DNase I family. Ca(2+) is required as a cofactor. The cofactor is Mg(2+). Post-translationally, N-glycosylated. As to expression, highly expressed in the parotid and submandibular gland as well as in the kidney and duodenum (at protein level). Expressed at intermediate level in the ileum, mesenterial lymph nodes, liver, ventral prostate, epididymis, ovary and stomach (at protein level). Expressed at low level in the sublingual, preputial, coagulation and pituitary gland (at protein level). Also present in the lachrymal and thyroid glands, striated muscle, intestine, the urinary bladder and the eye.

It is found in the secreted. Its subcellular location is the zymogen granule. It localises to the nucleus envelope. It carries out the reaction Endonucleolytic cleavage to 5'-phosphodinucleotide and 5'-phosphooligonucleotide end-products.. Its function is as follows. Serum endocuclease secreted into body fluids by a wide variety of exocrine and endocrine organs. Expressed by non-hematopoietic tissues and preferentially cleaves protein-free DNA. Among other functions, seems to be involved in cell death by apoptosis. Binds specifically to G-actin and blocks actin polymerization. Together with DNASE1L3, plays a key role in degrading neutrophil extracellular traps (NETs). NETs are mainly composed of DNA fibers and are released by neutrophils to bind pathogens during inflammation. Degradation of intravascular NETs by DNASE1 and DNASE1L3 is required to prevent formation of clots that obstruct blood vessels and cause organ damage following inflammation. The protein is Deoxyribonuclease-1 of Mus musculus (Mouse).